A 349-amino-acid chain; its full sequence is Xylitol-binding protein (349 aa).

Positions M1–A22 are cleaved as a signal peptide. A lipid anchor (N-palmitoyl cysteine) is attached at C23. C23 carries the S-diacylglycerol cysteine lipid modification. The xylitol site is built by Y42, N121, R173, N224, D249, and Q269.

This sequence belongs to the bacterial solute-binding protein 2 family.

Its subcellular location is the cell membrane. Part of an ABC transporter complex likely involved in xylitol import. Binds xylitol. This chain is Xylitol-binding protein, found in Mycolicibacterium smegmatis (strain ATCC 700084 / mc(2)155) (Mycobacterium smegmatis).